The sequence spans 530 residues: Ubiquitin carboxyl-terminal hydrolase 17 (530 aa).

Residues 80 to 375 (AGLQNMGNTC…QAYVLFYIQK (296 aa)) enclose the USP domain. The active-site Nucleophile is Cys89. Residue His334 is the Proton acceptor of the active site. Composition is skewed to basic and acidic residues over residues 382–392 (SESVSRGREPR) and 398–413 (DTDR…RDHP). Disordered regions lie at residues 382–416 (SESV…PCLQ) and 490–530 (SSTT…LVCQ). The interval 399–530 (TDRRATQGEL…HSKRALLVCQ (132 aa)) is mediates interaction with SUDS3. The span at 498–510 (ESVNTGTLASLQG) shows a compositional bias: polar residues. Over residues 511 to 524 (RTRRSKGKNKHSKR) the composition is skewed to basic residues.

This sequence belongs to the peptidase C19 family. USP17 subfamily. As to quaternary structure, interacts with SUDS3; the interaction is direct. As to expression, broadly expressed.

Its subcellular location is the nucleus. It localises to the endoplasmic reticulum. The catalysed reaction is Thiol-dependent hydrolysis of ester, thioester, amide, peptide and isopeptide bonds formed by the C-terminal Gly of ubiquitin (a 76-residue protein attached to proteins as an intracellular targeting signal).. Functionally, deubiquitinating enzyme that removes conjugated ubiquitin from specific proteins to regulate different cellular processes. Regulates cell proliferation by deubiquitinating and inhibiting RCE1 thereby controlling the small GTPases NRAS and HRAS localization and activation. In parallel, mediates deubiquitination of CDC25A, preventing CDC25A degradation by the proteasome during the G1/S and G2/M phases promoting cell-cycle progression. Also regulates cell proliferation and apoptosis through deubiquitination of SUDS3 a regulator of histone deacetylation. Through activation of the Rho family GTPases RAC1A, CDC42 and RHOA, regulates cell migration. Through the cleavage of 'Lys-48'- and 'Lys-63'-linked polyubiquitin chains of the cytoplasmic innate immune receptors RIGI and IFIH1 stimulates the cellular response to viral infection. The protein is Ubiquitin carboxyl-terminal hydrolase 17 (USP17L2) of Homo sapiens (Human).